Reading from the N-terminus, the 920-residue chain is MPGRAGVARFCLLALALQLHWPLAACEPGWTTRGSQEGSPPLQHELIIPQWRTSESPGRGKHPLRAELRVMAEGRELILDLEKNEHLFAPAYTETCYTASGNPQTSTLKSEDHCFYHGTVRDVDESSVTLSTCRGIRGLIIVRSNLSYIIEPVPNSDSQHRIYRSEHLTLPPGNCGFEHSGPTSKDWALQFTHQTKKQPRRMKREDLHSMKYVELYLVADYAEFQKNRHDQDATKRKLMEIANYVDKFYRSLNIRIALVGLEVWTHGDKCEVSENPYSTLWSFLSWRRKLLAQKSHDNAQLITGRSFQGTTIGLAPLMAMCSVYQSGGVSMDHSENAIGVASTVAHEIGHNFGMSHDSAHCCSASAADGGCIMAAATGHPFPKVFSWCNRKELDRYLQTGGGMCLSNMPDTRTLYGGRRCGNGYLEDGEECDCGEEEECKNPCCNASNCTLKEGAECAHGSCCHQCKLVAPGTQCREQVRQCDLPEFCTGKSPHCPTNYYQMDGTPCEGGQAYCYNGMCLTYQEQCQQLWGPGARPALDLCFERVNAAGDTYGNCGKGLNGQYRKCSPRDAKCGKIQCQSTQARPLESNAVSIDTTITLNGRRIHCRGTHVYRGPEEEEGEGDMLDPGLVMTGTKCGHNHICFEGQCRNTSFFETEGCGKKCNGHGVCNNNKNCHCFPGWSPPFCNTPGDGGSVDSGPLPPKSVGPVIAGVFSALFVLAVLVLLCHCYRQSHKLGKPSALPFKLRHQFSCPFRVSQSGGTGHANPTFKLQTPQGKRKVTNTPESLRKPSHPPPRPPPDYLRVESPPAPLPAHLNRAAGSSPEAGARIERKESARRPPPSRPMPPAPNCLLSQDFSRPRPPQKALPANPVPGQRTGPRSGGTSLLQPPTSGPQPPRPPAVPVPKLPEYRSQRVGAIISSKI.

Residues methionine 1 to cysteine 26 form the signal peptide. The propeptide occupies glutamate 27 to arginine 204. The Extracellular segment spans residues glutamate 27 to serine 703. The Cysteine switch motif lies at serine 131–glycine 138. Cysteine 133 contributes to the Zn(2+) binding site. Asparagine 145 carries an N-linked (GlcNAc...) asparagine glycan. Residues lysine 211 to proline 409 form the Peptidase M12B domain. Disulfide bonds link cysteine 321/cysteine 404, cysteine 361/cysteine 388, and cysteine 362/cysteine 371. Histidine 346 provides a ligand contact to Zn(2+). Glutamate 347 is a catalytic residue. 2 residues coordinate Zn(2+): histidine 350 and histidine 356. Positions glycine 417–aspartate 503 constitute a Disintegrin domain. N-linked (GlcNAc...) asparagine glycosylation is found at asparagine 445 and asparagine 448. Cysteine 475 and cysteine 495 are disulfide-bonded. N-linked (GlcNAc...) asparagine glycosylation occurs at asparagine 649. Residues glutamate 654–asparagine 686 enclose the EGF-like domain. Intrachain disulfides connect cysteine 658-cysteine 668, cysteine 662-cysteine 674, and cysteine 676-cysteine 685. A helical transmembrane segment spans residues valine 704–leucine 724. The Cytoplasmic segment spans residues cysteine 725–isoleucine 920. The disordered stretch occupies residues serine 755–isoleucine 920. The segment covering phenylalanine 767–glutamate 783 has biased composition (polar residues). The segment covering alanine 825–arginine 834 has biased composition (basic and acidic residues). The SH3-binding motif lies at arginine 835–proline 846. 2 stretches are compositionally biased toward pro residues: residues arginine 835–proline 846 and threonine 888–lysine 903.

In terms of assembly, interacts with SH3PXD2A. Zn(2+) is required as a cofactor. In terms of processing, the precursor is cleaved by a furin endopeptidase. As to expression, widely expressed, with the highest expression in bone, heart and lung, followed by brain and spleen and relatively low expression in liver, skeletal muscle, kidney and testis. In bone, primarily expressed in cell of the osteoblast lineage and not detected in mature osteoclasts.

The protein resides in the membrane. Functionally, participates in the proteolytic processing of beta-type neuregulin isoforms which are involved in neurogenesis and synaptogenesis, suggesting a regulatory role in glial cell. Also cleaves alpha-2 macroglobulin. May be involved in osteoblast differentiation and/or osteoblast activity in bone. This chain is Disintegrin and metalloproteinase domain-containing protein 19 (Adam19), found in Mus musculus (Mouse).